The following is a 523-amino-acid chain: Protein disulfide-isomerase (523 aa).

An N-terminal signal peptide occupies residues 1–22; the sequence is MPGVRSLLLALAGVSLAPAVLA. One can recognise a Thioredoxin 1 domain in the interval 24-137; that stretch reads DASTDSSDVH…TSYMIKQSLP (114 aa). Residues cysteine 59 and cysteine 62 each act as nucleophile in the active site. Cysteine 59 and cysteine 62 are oxidised to a cystine. Asparagine 170 carries an N-linked (GlcNAc...) asparagine glycan. One can recognise a Thioredoxin 2 domain in the interval 344-475; it reads VIAGDIAPSV…LANFVRDNGK (132 aa). Cysteine 394 and cysteine 397 are disulfide-bonded. Basic and acidic residues-rich tracts occupy residues 478 to 502 and 512 to 523; these read VDAY…DAEA and SEEKADKEHEEL. Residues 478 to 523 form a disordered region; sequence VDAYDEKKVEKDGSDVTGKPKDAEAPPKPSDAPESEEKADKEHEEL. Residues 520–523 carry the Prevents secretion from ER motif; it reads HEEL.

The protein belongs to the protein disulfide isomerase family.

It is found in the endoplasmic reticulum lumen. The enzyme catalyses Catalyzes the rearrangement of -S-S- bonds in proteins.. Functionally, participates in the folding of proteins containing disulfide bonds, may be involved in glycosylation, prolyl hydroxylation and triglyceride transfer. The sequence is that of Protein disulfide-isomerase from Arthroderma benhamiae (strain ATCC MYA-4681 / CBS 112371) (Trichophyton mentagrophytes).